A 118-amino-acid chain; its full sequence is Small ribosomal subunit protein uS13 (118 aa).

Positions 92-118 (RRNLPVRGQNTKNNARTRKGPTRPLKR) are disordered. A compositionally biased stretch (basic residues) spans 106–118 (ARTRKGPTRPLKR).

The protein belongs to the universal ribosomal protein uS13 family. In terms of assembly, part of the 30S ribosomal subunit. Forms a loose heterodimer with protein S19. Forms two bridges to the 50S subunit in the 70S ribosome.

Functionally, located at the top of the head of the 30S subunit, it contacts several helices of the 16S rRNA. In the 70S ribosome it contacts the 23S rRNA (bridge B1a) and protein L5 of the 50S subunit (bridge B1b), connecting the 2 subunits; these bridges are implicated in subunit movement. Contacts the tRNAs in the A and P-sites. The polypeptide is Small ribosomal subunit protein uS13 (Psychrobacter arcticus (strain DSM 17307 / VKM B-2377 / 273-4)).